The chain runs to 307 residues: tRNA dimethylallyltransferase (307 aa).

10 to 17 (GPTASGKS) lines the ATP pocket. 12–17 (TASGKS) is a binding site for substrate. 2 interaction with substrate tRNA regions span residues 35–38 (DSMQ) and 159–163 (QRLCR).

It belongs to the IPP transferase family. In terms of assembly, monomer. Mg(2+) is required as a cofactor.

The enzyme catalyses adenosine(37) in tRNA + dimethylallyl diphosphate = N(6)-dimethylallyladenosine(37) in tRNA + diphosphate. Functionally, catalyzes the transfer of a dimethylallyl group onto the adenine at position 37 in tRNAs that read codons beginning with uridine, leading to the formation of N6-(dimethylallyl)adenosine (i(6)A). The protein is tRNA dimethylallyltransferase of Phenylobacterium zucineum (strain HLK1).